The sequence spans 623 residues: Glutathione import ATP-binding protein GsiA (623 aa).

ABC transporter domains lie at 15–269 (VSGL…QTLL) and 325–564 (LRSG…RKLM). ATP is bound by residues 49 to 56 (GESGSGKS) and 357 to 364 (GESGSGKS).

The protein belongs to the ABC transporter superfamily. Glutathione importer (TC 3.A.1.5.11) family. As to quaternary structure, the complex is composed of two ATP-binding proteins (GsiA), two transmembrane proteins (GsiC and GsiD) and a solute-binding protein (GsiB).

Its subcellular location is the cell inner membrane. It carries out the reaction glutathione(out) + ATP + H2O = glutathione(in) + ADP + phosphate + H(+). Part of the ABC transporter complex GsiABCD involved in glutathione import. Responsible for energy coupling to the transport system. The polypeptide is Glutathione import ATP-binding protein GsiA (Salmonella paratyphi A (strain ATCC 9150 / SARB42)).